Here is a 259-residue protein sequence, read N- to C-terminus: Ribosomal RNA small subunit methyltransferase J (259 aa).

S-adenosyl-L-methionine is bound by residues 101–102 (RD), 117–118 (ER), 153–154 (SS), and Asp-176.

It belongs to the methyltransferase superfamily. RsmJ family.

It localises to the cytoplasm. It carries out the reaction guanosine(1516) in 16S rRNA + S-adenosyl-L-methionine = N(2)-methylguanosine(1516) in 16S rRNA + S-adenosyl-L-homocysteine + H(+). Its function is as follows. Specifically methylates the guanosine in position 1516 of 16S rRNA. In Aliivibrio fischeri (strain ATCC 700601 / ES114) (Vibrio fischeri), this protein is Ribosomal RNA small subunit methyltransferase J.